The following is a 119-amino-acid chain: Immunoglobulin heavy variable 3-73 (119 aa).

Residues 1-19 (MEFGLSWVFLVAILKGVQC) form the signal peptide. The tract at residues 20–44 (EVQLVESGGGLVQPGGSLKLSCAAS) is framework-1. An Ig-like domain is found at 20 to 119 (EVQLVESGGG…EDTAVYYCTR (100 aa)). A disulfide bond links Cys-41 and Cys-117. The segment at 45–52 (GFTFSGSA) is complementarity-determining-1. Residues 53-69 (MHWVRQASGKGLEWVGR) are framework-2. Residues 70-79 (IRSKANSYAT) form a complementarity-determining-2 region. Residues 80–117 (AYAASVKGRFTISRDDSKNTAYLQMNSLKTEDTAVYYC) form a framework-3 region. Residues 118–119 (TR) form a complementarity-determining-3 region.

As to quaternary structure, immunoglobulins are composed of two identical heavy chains and two identical light chains; disulfide-linked.

The protein resides in the secreted. Its subcellular location is the cell membrane. Its function is as follows. V region of the variable domain of immunoglobulin heavy chains that participates in the antigen recognition. Immunoglobulins, also known as antibodies, are membrane-bound or secreted glycoproteins produced by B lymphocytes. In the recognition phase of humoral immunity, the membrane-bound immunoglobulins serve as receptors which, upon binding of a specific antigen, trigger the clonal expansion and differentiation of B lymphocytes into immunoglobulins-secreting plasma cells. Secreted immunoglobulins mediate the effector phase of humoral immunity, which results in the elimination of bound antigens. The antigen binding site is formed by the variable domain of one heavy chain, together with that of its associated light chain. Thus, each immunoglobulin has two antigen binding sites with remarkable affinity for a particular antigen. The variable domains are assembled by a process called V-(D)-J rearrangement and can then be subjected to somatic hypermutations which, after exposure to antigen and selection, allow affinity maturation for a particular antigen. In Homo sapiens (Human), this protein is Immunoglobulin heavy variable 3-73.